The primary structure comprises 205 residues: Large ribosomal subunit protein uL3c (205 aa).

Positions 130–150 (RGPMSHGSKNHRQPGSIGAGT) are disordered.

This sequence belongs to the universal ribosomal protein uL3 family. As to quaternary structure, part of the 50S ribosomal subunit.

The protein resides in the plastid. The protein localises to the chloroplast. One of the primary rRNA binding proteins, it binds directly near the 3'-end of the 23S rRNA, where it nucleates assembly of the 50S subunit. This chain is Large ribosomal subunit protein uL3c (rpl3), found in Gracilaria tenuistipitata var. liui (Red alga).